A 1345-amino-acid polypeptide reads, in one-letter code: DNA-directed RNA polymerase subunit beta (1345 aa).

This sequence belongs to the RNA polymerase beta chain family. As to quaternary structure, the RNAP catalytic core consists of 2 alpha, 1 beta, 1 beta' and 1 omega subunit. When a sigma factor is associated with the core the holoenzyme is formed, which can initiate transcription.

It catalyses the reaction RNA(n) + a ribonucleoside 5'-triphosphate = RNA(n+1) + diphosphate. Its function is as follows. DNA-dependent RNA polymerase catalyzes the transcription of DNA into RNA using the four ribonucleoside triphosphates as substrates. This is DNA-directed RNA polymerase subunit beta from Shewanella sp. (strain MR-4).